The primary structure comprises 239 residues: Vesicle-associated protein 1-3 (239 aa).

At Met1 the chain carries N-acetylmethionine. Thr2 carries the N-acetylthreonine; in Vesicle-associated protein 1-3, N-terminally processed modification. Residues 2–215 (TTGDLVNIHP…RKETSKKQSG (214 aa)) lie on the Cytoplasmic side of the membrane. An MSP domain is found at 6 to 127 (LVNIHPTELK…EDFKLRVVYI (122 aa)). A phosphoserine mark is found at Ser133 and Ser164. Residues 179–214 (SMISKLTEEKTSATQQSQKLRLELEMLRKETSKKQS) are a coiled coil. Residues 216-236 (GHSLLLMLLVGLLGCVIGYLL) traverse the membrane as a helical; Anchor for type IV membrane protein segment.

Belongs to the VAMP-associated protein (VAP) (TC 9.B.17) family.

The protein localises to the endoplasmic reticulum membrane. Its function is as follows. May play a role in vesicle trafficking. In Arabidopsis thaliana (Mouse-ear cress), this protein is Vesicle-associated protein 1-3 (PVA13).